The sequence spans 588 residues: uncharacterized protein (588 aa).

This is an uncharacterized protein from Schizosaccharomyces pombe (strain 972 / ATCC 24843) (Fission yeast).